The following is a 346-amino-acid chain: Aspartate-semialdehyde dehydrogenase (346 aa).

Residues 12-15 (SGAV) and 40-41 (RS) each bind NADP(+). Arginine 101 provides a ligand contact to phosphate. The active-site Acyl-thioester intermediate is the cysteine 131. Glutamine 158 contributes to the substrate binding site. 161–162 (SG) serves as a coordination point for NADP(+). Lysine 225 is a binding site for phosphate. A substrate-binding site is contributed by arginine 246. Histidine 253 serves as the catalytic Proton acceptor. Glutamine 326 serves as a coordination point for NADP(+).

This sequence belongs to the aspartate-semialdehyde dehydrogenase family. As to quaternary structure, homodimer.

It catalyses the reaction L-aspartate 4-semialdehyde + phosphate + NADP(+) = 4-phospho-L-aspartate + NADPH + H(+). It functions in the pathway amino-acid biosynthesis; L-lysine biosynthesis via DAP pathway; (S)-tetrahydrodipicolinate from L-aspartate: step 2/4. The protein operates within amino-acid biosynthesis; L-methionine biosynthesis via de novo pathway; L-homoserine from L-aspartate: step 2/3. It participates in amino-acid biosynthesis; L-threonine biosynthesis; L-threonine from L-aspartate: step 2/5. Functionally, catalyzes the NADPH-dependent formation of L-aspartate-semialdehyde (L-ASA) by the reductive dephosphorylation of L-aspartyl-4-phosphate. The protein is Aspartate-semialdehyde dehydrogenase of Helicobacter pylori (strain J99 / ATCC 700824) (Campylobacter pylori J99).